Reading from the N-terminus, the 575-residue chain is DNA-directed RNA polymerase subunit beta' (575 aa).

Belongs to the RNA polymerase beta' chain family. In terms of assembly, in plastids the minimal PEP RNA polymerase catalytic core is composed of four subunits: alpha, beta, beta', and beta''. When a (nuclear-encoded) sigma factor is associated with the core the holoenzyme is formed, which can initiate transcription.

The protein localises to the plastid. It is found in the apicoplast. The enzyme catalyses RNA(n) + a ribonucleoside 5'-triphosphate = RNA(n+1) + diphosphate. Its function is as follows. DNA-dependent RNA polymerase catalyzes the transcription of DNA into RNA using the four ribonucleoside triphosphates as substrates. This is DNA-directed RNA polymerase subunit beta' (rpoC1) from Plasmodium falciparum (isolate 3D7).